Reading from the N-terminus, the 283-residue chain is ATP phosphoribosyltransferase (283 aa).

It belongs to the ATP phosphoribosyltransferase family. Long subfamily. Mg(2+) is required as a cofactor.

Its subcellular location is the cytoplasm. It catalyses the reaction 1-(5-phospho-beta-D-ribosyl)-ATP + diphosphate = 5-phospho-alpha-D-ribose 1-diphosphate + ATP. It functions in the pathway amino-acid biosynthesis; L-histidine biosynthesis; L-histidine from 5-phospho-alpha-D-ribose 1-diphosphate: step 1/9. Feedback inhibited by histidine. In terms of biological role, catalyzes the condensation of ATP and 5-phosphoribose 1-diphosphate to form N'-(5'-phosphoribosyl)-ATP (PR-ATP). Has a crucial role in the pathway because the rate of histidine biosynthesis seems to be controlled primarily by regulation of HisG enzymatic activity. The sequence is that of ATP phosphoribosyltransferase from Nocardia farcinica (strain IFM 10152).